The following is a 337-amino-acid chain: MEQFLKGLPKVELHAHLNGSLGIKSLCDLGERLYGTSCKDFLKLCAHFSRFEKDMDACFEKFAFVHELTSTREGLRFATELAIRDFAEDNVQYVEMRTTPKANENYSRRDYLQIVIDAIKAASETYPEITVKLLPSINRAEPVDVAEETVSLAVELARAHPNLILGIDLSGNPGKGRFSDFAPILAQARDKGLKLAIHCAEIENPSEVKEMLHFGMSRCGHGTFLTPEDIGQLKQRNIAIECCLTSNVKSGTVPSLEEHHLKRIMEADAPKVICTDDSGVFDTTLTKEFLIAAETFGLTREQCIDLTLEAVHHSFASEQEQIQMADRVGNYADILVK.

His14 and His16 together coordinate Zn(2+). N(6)-methyl-AMP is bound by residues His16, Asn18, His66, Thr98–Lys101, and Gly171. His198 lines the Zn(2+) pocket. 3 residues coordinate N(6)-methyl-AMP: Glu201, Asp276, and Asp277. Glu201 functions as the Proton donor in the catalytic mechanism. Asp276 provides a ligand contact to Zn(2+).

The protein belongs to the metallo-dependent hydrolases superfamily. Adenosine and AMP deaminases family. In terms of assembly, monomer. It depends on Zn(2+) as a cofactor.

It catalyses the reaction N(6)-methyl-AMP + H2O + H(+) = IMP + methylamine. Its function is as follows. Catalyzes the hydrolysis of the free cytosolic methylated adenosine nucleotide N(6)-methyl-AMP (N6-mAMP) to produce inositol monophosphate (IMP) and methylamine. Is required for the catabolism of cytosolic N6-mAMP, which is derived from the degradation of mRNA containing N6-methylated adenine (m6A). This Drosophila melanogaster (Fruit fly) protein is Adenosine deaminase-like protein (Ada).